Reading from the N-terminus, the 362-residue chain is Ribosomal RNA large subunit methyltransferase M (362 aa).

S-adenosyl-L-methionine-binding positions include S194, 227 to 230, D246, D266, and D284; that span reads CPGG. The active-site Proton acceptor is K313.

This sequence belongs to the class I-like SAM-binding methyltransferase superfamily. RNA methyltransferase RlmE family. RlmM subfamily. As to quaternary structure, monomer.

It localises to the cytoplasm. It catalyses the reaction cytidine(2498) in 23S rRNA + S-adenosyl-L-methionine = 2'-O-methylcytidine(2498) in 23S rRNA + S-adenosyl-L-homocysteine + H(+). Functionally, catalyzes the 2'-O-methylation at nucleotide C2498 in 23S rRNA. This chain is Ribosomal RNA large subunit methyltransferase M, found in Aggregatibacter aphrophilus (strain NJ8700) (Haemophilus aphrophilus).